A 201-amino-acid polypeptide reads, in one-letter code: Superoxide dismutase [Mn] (201 aa).

Mn(2+) contacts are provided by histidine 27, histidine 81, aspartate 163, and histidine 167.

The protein belongs to the iron/manganese superoxide dismutase family. As to quaternary structure, homodimer. It depends on Mn(2+) as a cofactor.

The protein localises to the secreted. It catalyses the reaction 2 superoxide + 2 H(+) = H2O2 + O2. Destroys superoxide anion radicals which are normally produced within the cells and which are toxic to biological systems. The chain is Superoxide dismutase [Mn] (sodA) from Streptococcus pyogenes serotype M6 (strain ATCC BAA-946 / MGAS10394).